The chain runs to 165 residues: uncharacterized protein (165 aa).

This is an uncharacterized protein from Saccharomyces cerevisiae (strain ATCC 204508 / S288c) (Baker's yeast).